The chain runs to 236 residues: Eukaryotic translation initiation factor 3 subunit K (236 aa).

Residues Cys-48–Asp-218 form the PCI domain.

The protein belongs to the eIF-3 subunit K family.

The protein resides in the cytoplasm. Its function is as follows. Component of the eukaryotic translation initiation factor 3 (eIF-3) complex, which is involved in protein synthesis of a specialized repertoire of mRNAs and, together with other initiation factors, stimulates binding of mRNA and methionyl-tRNAi to the 40S ribosome. The eIF-3 complex specifically targets and initiates translation of a subset of mRNAs involved in cell proliferation. The sequence is that of Eukaryotic translation initiation factor 3 subunit K from Pyricularia oryzae (strain Y34) (Rice blast fungus).